Reading from the N-terminus, the 227-residue chain is Pro-thyrotropin-releasing hormone-A (227 aa).

The N-terminal stretch at Met1–Ser15 is a signal peptide. Gln75 bears the Pyrrolidone carboxylic acid mark. Pro77 carries the proline amide modification. Gln89 is modified (pyrrolidone carboxylic acid). Pro91 carries the proline amide modification. At Gln107 the chain carries Pyrrolidone carboxylic acid. Disordered regions lie at residues Gln107–Glu128 and Arg151–Gly204. Pro109 bears the Proline amide mark. A compositionally biased stretch (basic and acidic residues) spans Arg112–Glu128. Residue Gln121 is modified to Pyrrolidone carboxylic acid. At Pro123 the chain carries Proline amide. Gln153 carries the pyrrolidone carboxylic acid modification. Proline amide is present on Pro155. Residue Gln168 is modified to Pyrrolidone carboxylic acid. A Proline amide modification is found at Pro170. Over residues Glu184–Pro201 the composition is skewed to basic and acidic residues. The residue at position 193 (Gln193) is a Pyrrolidone carboxylic acid. At Pro195 the chain carries Proline amide.

It belongs to the TRH family.

The protein resides in the secreted. The chain is Pro-thyrotropin-releasing hormone-A (trh-a) from Xenopus laevis (African clawed frog).